Consider the following 153-residue polypeptide: Phosphoribosyl-AMP cyclohydrolase (153 aa).

Asp-93 is a Mg(2+) binding site. Cys-94 is a binding site for Zn(2+). Residues Asp-95 and Asp-97 each coordinate Mg(2+). Positions 112 and 119 each coordinate Zn(2+).

The protein belongs to the PRA-CH family. Homodimer. Mg(2+) serves as cofactor. Requires Zn(2+) as cofactor.

The protein resides in the cytoplasm. The catalysed reaction is 1-(5-phospho-beta-D-ribosyl)-5'-AMP + H2O = 1-(5-phospho-beta-D-ribosyl)-5-[(5-phospho-beta-D-ribosylamino)methylideneamino]imidazole-4-carboxamide. The protein operates within amino-acid biosynthesis; L-histidine biosynthesis; L-histidine from 5-phospho-alpha-D-ribose 1-diphosphate: step 3/9. Its function is as follows. Catalyzes the hydrolysis of the adenine ring of phosphoribosyl-AMP. This chain is Phosphoribosyl-AMP cyclohydrolase, found in Mesorhizobium japonicum (strain LMG 29417 / CECT 9101 / MAFF 303099) (Mesorhizobium loti (strain MAFF 303099)).